The following is a 1003-amino-acid chain: PHD finger protein 12 (1003 aa).

The tract at residues 29–59 (APPKTDEAEKRSRKPEKESRRSGRATNHDSC) is disordered. Basic and acidic residues predominate over residues 32–59 (KTDEAEKRSRKPEKESRRSGRATNHDSC). The PHD-type 1 zinc-finger motif lies at 56 to 105 (HDSCDSCKEGGDLLCCDHCPAAFHLQCCNPPLSEEMLPPGEWMCHRCTVR). 5 residues coordinate Zn(2+): C59, S61, C62, H79, and C82. 2 disordered regions span residues 110 to 183 (EQKK…HNDV) and 234 to 255 (TTAL…KNVK). Phosphoserine occurs at positions 131 and 134. Over residues 138-161 (LLDRPASKTELKAIAHARILERRA) the composition is skewed to basic and acidic residues. The segment covering 165–178 (GTPTSNASTETPTS) has biased composition (polar residues). Residues 202–241 (VQPQLRRPFELLIAAAMERNPTQFQLPNELTCTTALPGSS) form an SIN3 interacting domain 1 region. The segment at 271 to 321 (VKVCFTCNRSCRVAPLIQCDYCPLLFHMDCLEPPLTAMPLGRWMCPNHIEH) adopts a PHD-type 2; atypical zinc-finger fold. Zn(2+)-binding residues include C274, C277, C289, C292, H297, C300, C315, and H318. Positions 328 to 364 (NLTLSNRCQVFDRFQDTISQHVVKVDFLNRIHKKHPP) are SIN3 interacting domain 2. Residue K467 forms a Glycyl lysine isopeptide (Lys-Gly) (interchain with G-Cter in SUMO2) linkage. Disordered stretches follow at residues 531 to 583 (KAPC…GWPR) and 641 to 671 (HRKT…VLTP). S555 bears the Phosphoserine mark. Phosphothreonine is present on residues T557 and T570. Positions 641–656 (HRKTVQSQIGPSSTES) are enriched in polar residues. T670 carries the phosphothreonine modification. Residues 814 to 868 (LYIGTGADMDVCLTNYGHCNYVSGKHACIFYDENTKHYELLNYSEHGTTVDNVLY) enclose the FHA domain. The interval 894-922 (RRRHQKQDEEPSEEAAMMSSQAQGPQRRP) is disordered. A Glycyl lysine isopeptide (Lys-Gly) (interchain with G-Cter in SUMO2) cross-link involves residue K899. Low complexity predominate over residues 907–916 (EAAMMSSQAQ). Residues K972, K986, and K990 each participate in a glycyl lysine isopeptide (Lys-Gly) (interchain with G-Cter in SUMO2) cross-link.

As to quaternary structure, component of SIN3 complexes. Interacts with SIN3A in a complex composed of HDAC1, SAP30 and SIN3A. Component of the SIN3B complex, which includes SIN3B, HDAC2 or HDAC1, PHF12 and MORF4L1; interacts directly with all subunits. Interacts with TLE5. Expressed mainly in heart, brain, lung, liver and testis.

It localises to the nucleus. Its function is as follows. Transcriptional repressor acting as key scaffolding subunit of SIN3 complexes which contributes to complex assembly by contacting each core subunit domain, stabilizes the complex and constitutes the substrate receptor by recruiting the H3 histone tail. SIN3 complexes are composed of a SIN3 scaffold subunit, one catalytic core (HDAC1 or HDAC2) and 2 chromatin targeting modules. SIN3B complex represses transcription and counteracts the histone acetyltransferase activity of EP300 through the recognition H3K27ac marks by PHF12 and the activity of the histone deacetylase HDAC2. SIN3B complex is recruited downstream of the constitutively active genes transcriptional start sites through interaction with histones and mitigates histone acetylation and RNA polymerase II progression within transcribed regions contributing to the regulation of transcription. May also repress transcription in a SIN3A-independent manner through recruitment of functional TLE5 complexes to DNA. May also play a role in ribosomal biogenesis. In Mus musculus (Mouse), this protein is PHD finger protein 12.